We begin with the raw amino-acid sequence, 149 residues long: MEKKEKSMNKSFKNLVIGAVSGVAAAYFLSTEKGKALKNRAEKAYQAYKESPDDYHQFAKEKGSEYSHLARDTFYDVKDKLASGDLTKEDMLDLLKDKTTAFVQKTKETFAEVEAKEKQDDVIIDLNEDDIIIDYTEQDEPVSDTLDKH.

Residues phenylalanine 12–threonine 31 traverse the membrane as a helical segment.

It is found in the membrane. This is an uncharacterized protein from Streptococcus pyogenes serotype M6 (strain ATCC BAA-946 / MGAS10394).